Reading from the N-terminus, the 225-residue chain is C-reactive protein (225 aa).

The N-terminal stretch at 1 to 19 (MEKLLWCSLVMIGFSQAFA) is a signal peptide. Q20 carries the post-translational modification Pyrrolidone carboxylic acid. In terms of domain architecture, Pentraxin (PTX) spans 24–225 (SKTAFVFPKE…DVFIKPQLWP (202 aa)). A disulfide bridge links C55 with C116. Ca(2+) contacts are provided by N80, E157, Q158, D159, and Q169.

The protein belongs to the pentraxin family. Homopentamer. Pentraxin (or pentaxin) have a discoid arrangement of 5 non-covalently bound subunits. Interacts with FCN1; may regulate monocyte activation by FCN1. Ca(2+) serves as cofactor. Found in plasma.

Its subcellular location is the secreted. Its function is as follows. Displays several functions associated with host defense: it promotes agglutination, bacterial capsular swelling, phagocytosis and complement fixation through its calcium-dependent binding to phosphorylcholine. Can interact with DNA and histones and may scavenge nuclear material released from damaged circulating cells. This Mesocricetus auratus (Golden hamster) protein is C-reactive protein (CRP).